A 356-amino-acid chain; its full sequence is UDP-N-acetylglucosamine--N-acetylmuramyl-(pentapeptide) pyrophosphoryl-undecaprenol N-acetylglucosamine transferase (356 aa).

UDP-N-acetyl-alpha-D-glucosamine-binding positions include 11–13 (TGG), N123, R159, S187, I241, 260–265 (ALTVAE), and Q286.

This sequence belongs to the glycosyltransferase 28 family. MurG subfamily.

It is found in the cell inner membrane. The enzyme catalyses di-trans,octa-cis-undecaprenyl diphospho-N-acetyl-alpha-D-muramoyl-L-alanyl-D-glutamyl-meso-2,6-diaminopimeloyl-D-alanyl-D-alanine + UDP-N-acetyl-alpha-D-glucosamine = di-trans,octa-cis-undecaprenyl diphospho-[N-acetyl-alpha-D-glucosaminyl-(1-&gt;4)]-N-acetyl-alpha-D-muramoyl-L-alanyl-D-glutamyl-meso-2,6-diaminopimeloyl-D-alanyl-D-alanine + UDP + H(+). It functions in the pathway cell wall biogenesis; peptidoglycan biosynthesis. Functionally, cell wall formation. Catalyzes the transfer of a GlcNAc subunit on undecaprenyl-pyrophosphoryl-MurNAc-pentapeptide (lipid intermediate I) to form undecaprenyl-pyrophosphoryl-MurNAc-(pentapeptide)GlcNAc (lipid intermediate II). In Azoarcus sp. (strain BH72), this protein is UDP-N-acetylglucosamine--N-acetylmuramyl-(pentapeptide) pyrophosphoryl-undecaprenol N-acetylglucosamine transferase.